The sequence spans 410 residues: Platelet-activating factor acetylhydrolase IB subunit alpha (410 aa).

The required for self-association and interaction with PAFAH1B2 and PAFAH1B3 stretch occupies residues 1–38 (MVLSQRQRDELNRAIADYLRSNGYEEAYSVFKKEAELD). An interaction with NDE1 region spans residues 1–66 (MVLSQRQRDE…SVIRLQKKVM (66 aa)). Residues 1–102 (MVLSQRQRDE…EWIPRPPEKY (102 aa)) are interaction with NDEL1. In terms of domain architecture, LisH spans 7 to 39 (QRDELNRAIADYLRSNGYEEAYSVFKKEAELDM). An N6-acetyllysine modification is found at Lys53. The stretch at 56 to 82 (TSVIRLQKKVMELESKLNEAKEEFTSG) forms a coiled coil. The tract at residues 83 to 410 (GPLGQKRDPK…DQTVKVWECR (328 aa)) is interaction with dynein and dynactin. WD repeat units follow at residues 106–147 (GHRS…RTLK), 148–187 (GHTD…CIRT), 190–229 (GHDH…CVKT), 232–271 (GHRE…CKAE), 274–333 (EHEH…CLMT), 336–377 (GHDN…KTLN), and 379–410 (HEHF…WECR). At Ser109 the chain carries Phosphoserine. Positions 367 to 409 (YKNKRCMKTLNAHEHFVTSLDFHKTAPYVVTGFVDQTVKVWEC) are interaction with DCX. Positions 388-410 (FHKTAPYVVTGFVDQTVKVWECR) are interaction with NDEL1.

Belongs to the WD repeat LIS1/nudF family. Can self-associate. Component of the cytosolic PAF-AH (I) heterotetrameric enzyme, which is composed of PAFAH1B1 (beta), PAFAH1B2 (alpha2) and PAFAH1B3 (alpha1) subunits. The catalytic activity of the enzyme resides in the alpha1 (PAFAH1B3) and alpha2 (PAFAH1B2) subunits, whereas the beta subunit (PAFAH1B1) has regulatory activity. Trimer formation is not essential for the catalytic activity. Interacts with the catalytic dimer of PAF-AH (I) heterotetrameric enzyme: interacts with PAFAH1B2 homodimer (alpha2/alpha2 homodimer), PAFAH1B3 homodimer (alpha1/alpha1 homodimer) and PAFAH1B2-PAFAH1B3 heterodimer (alpha2/alpha1 heterodimer). Interacts with DCX, dynein, dynactin, IQGAP1, KATNB1, NDE1, NDEL1, NUDC and RSN. Interacts with DISC1, and this interaction is enhanced by NDEL1. Interacts with DAB1 when DAB1 is phosphorylated in response to RELN/reelin signaling. Interacts with INTS13. Interacts with DCDC1.

It localises to the cytoplasm. The protein localises to the cytoskeleton. Its subcellular location is the microtubule organizing center. The protein resides in the centrosome. It is found in the spindle. It localises to the nucleus membrane. In terms of biological role, regulatory subunit (beta subunit) of the cytosolic type I platelet-activating factor (PAF) acetylhydrolase (PAF-AH (I)), an enzyme that catalyzes the hydrolyze of the acetyl group at the sn-2 position of PAF and its analogs and participates in PAF inactivation. Regulates the PAF-AH (I) activity in a catalytic dimer composition-dependent manner. Positively regulates the activity of the minus-end directed microtubule motor protein dynein. May enhance dynein-mediated microtubule sliding by targeting dynein to the microtubule plus end. Required for several dynein- and microtubule-dependent processes such as the maintenance of Golgi integrity, the peripheral transport of microtubule fragments and the coupling of the nucleus and centrosome. Required during brain development for the proliferation of neuronal precursors and the migration of newly formed neurons from the ventricular/subventricular zone toward the cortical plate. Neuronal migration involves a process called nucleokinesis, whereby migrating cells extend an anterior process into which the nucleus subsequently translocates. During nucleokinesis dynein at the nuclear surface may translocate the nucleus towards the centrosome by exerting force on centrosomal microtubules. Also required for proper activation of Rho GTPases and actin polymerization at the leading edge of locomoting cerebellar neurons and postmigratory hippocampal neurons in response to calcium influx triggered via NMDA receptors. May also play a role in other forms of cell locomotion including the migration of fibroblasts during wound healing. Required for dynein recruitment to microtubule plus ends and BICD2-bound cargos. May modulate the Reelin pathway through interaction of the PAF-AH (I) catalytic dimer with VLDLR. The chain is Platelet-activating factor acetylhydrolase IB subunit alpha from Pan troglodytes (Chimpanzee).